The primary structure comprises 787 residues: DNA ligase (787 aa).

Residues 32–36, 81–82, and Glu121 contribute to the NAD(+) site; these read DVEYD and SL. Lys123 (N6-AMP-lysine intermediate) is an active-site residue. Residues Arg144, Glu181, Lys297, and Lys321 each contribute to the NAD(+) site. Positions 415, 418, 445, and 451 each coordinate Zn(2+). Residues 703 to 787 form the BRCT domain; that stretch reads VEGLPLAGQT…RLTELGVAVD (85 aa).

Belongs to the NAD-dependent DNA ligase family. LigA subfamily. Mg(2+) serves as cofactor. Mn(2+) is required as a cofactor.

The catalysed reaction is NAD(+) + (deoxyribonucleotide)n-3'-hydroxyl + 5'-phospho-(deoxyribonucleotide)m = (deoxyribonucleotide)n+m + AMP + beta-nicotinamide D-nucleotide.. Its function is as follows. DNA ligase that catalyzes the formation of phosphodiester linkages between 5'-phosphoryl and 3'-hydroxyl groups in double-stranded DNA using NAD as a coenzyme and as the energy source for the reaction. It is essential for DNA replication and repair of damaged DNA. The polypeptide is DNA ligase (Pseudomonas savastanoi pv. phaseolicola (strain 1448A / Race 6) (Pseudomonas syringae pv. phaseolicola (strain 1448A / Race 6))).